A 467-amino-acid polypeptide reads, in one-letter code: Argininosuccinate lyase (467 aa).

It belongs to the lyase 1 family. Argininosuccinate lyase subfamily.

The protein localises to the cytoplasm. It catalyses the reaction 2-(N(omega)-L-arginino)succinate = fumarate + L-arginine. It participates in amino-acid biosynthesis; L-arginine biosynthesis; L-arginine from L-ornithine and carbamoyl phosphate: step 3/3. In Rhizobium etli (strain CIAT 652), this protein is Argininosuccinate lyase.